Reading from the N-terminus, the 596-residue chain is Putative ankyrin repeat protein FPV024 (596 aa).

ANK repeat units follow at residues 5 to 34 (KLRKDLHRTIRTRDLNAVKHIILKKYTFSN), 37 to 66 (ALSTPLYLAVSNSDIDIVKFLLDNGADINK), 68 to 96 (KSPPLHKAINLGNVEMVKLLVDHGADIEK), 99 to 128 (LGNSPLYLALCKRNTNITKYLLERGADPNT), 130 to 158 (FINYCDAIYNKIPIDIFKILIKYKVSLNI), 162 to 191 (HFKTPIYYAIKCTNYPLIKLLLENNASLTI), 195 to 225 (YNNHYLITAVKHNCDISILRLLIKYGVPVNE), 229 to 258 (LERTSLHYCVSAGKHDILKLLLDYDADPNI), 262 to 291 (CLGTPLHYAVSRNDIIATTLLIEKGANVNI), 295 to 324 (TIDTVLNIAVGNRNKILINLLLMYGANTRL), 326 to 355 (SRNPLIHKALETKDINILSEILNHGAEVNI), 359 to 389 (EGYTPLYIAIITFMQIKFAKLLLRYGSNPNM), and 394 to 423 (NENTPLHGAILSNRLDSVELLMSYNVDVHS).

The chain is Putative ankyrin repeat protein FPV024 from Fowlpox virus (strain NVSL) (FPV).